Consider the following 133-residue polypeptide: Large ribosomal subunit protein bL20 (133 aa).

This sequence belongs to the bacterial ribosomal protein bL20 family.

Its function is as follows. Binds directly to 23S ribosomal RNA and is necessary for the in vitro assembly process of the 50S ribosomal subunit. It is not involved in the protein synthesizing functions of that subunit. This is Large ribosomal subunit protein bL20 from Chelativorans sp. (strain BNC1).